Reading from the N-terminus, the 236-residue chain is WUSCHEL-related homeobox 4 (236 aa).

The segment at residues 88-152 (AGTTRWNPSA…NHKARERQKQ (65 aa)) is a DNA-binding region (homeobox; WUS-type). The segment at 169 to 188 (PATANETKEAPEKKEKDVED) is disordered. Positions 174 to 187 (ETKEAPEKKEKDVE) are enriched in basic and acidic residues.

This sequence belongs to the WUS homeobox family.

The protein resides in the nucleus. In terms of biological role, transcription factor which may be involved in developmental processes. In Oryza sativa subsp. indica (Rice), this protein is WUSCHEL-related homeobox 4 (WOX4).